The sequence spans 843 residues: Protein P (843 aa).

The tract at residues 1 to 177 (MPLSYQHFRK…FCGSPYSWEQ (177 aa)) is terminal protein domain (TP). Positions 178 to 346 (ELQHGRLVFQ…YCLSHLINLH (169 aa)) are spacer. 2 disordered regions span residues 218-243 (LKQS…SGSI) and 291-315 (TAQR…AGSQ). The interval 347 to 690 (EDWGPCIEHG…YLNLYPVARQ (344 aa)) is polymerase/reverse transcriptase domain (RT). The 244-residue stretch at 357-600 (EHNIRIPRTP…YSLNFMGYVI (244 aa)) folds into the Reverse transcriptase domain. Residues D429, D551, and D552 each contribute to the Mg(2+) site.

Belongs to the hepadnaviridae P protein family.

The enzyme catalyses DNA(n) + a 2'-deoxyribonucleoside 5'-triphosphate = DNA(n+1) + diphosphate. It catalyses the reaction Endonucleolytic cleavage to 5'-phosphomonoester.. Activated by host HSP70 and HSP40 in vitro to be able to bind the epsilon loop of the pgRNA. Because deletion of the RNase H region renders the protein partly chaperone-independent, the chaperones may be needed indirectly to relieve occlusion of the RNA-binding site by this domain. Inhibited by several reverse-transcriptase inhibitors: Lamivudine, Adefovir and Entecavir. In terms of biological role, multifunctional enzyme that converts the viral RNA genome into dsDNA in viral cytoplasmic capsids. This enzyme displays a DNA polymerase activity that can copy either DNA or RNA templates, and a ribonuclease H (RNase H) activity that cleaves the RNA strand of RNA-DNA heteroduplexes in a partially processive 3'- to 5'-endonucleasic mode. Neo-synthesized pregenomic RNA (pgRNA) are encapsidated together with the P protein, and reverse-transcribed inside the nucleocapsid. Initiation of reverse-transcription occurs first by binding the epsilon loop on the pgRNA genome, and is initiated by protein priming, thereby the 5'-end of (-)DNA is covalently linked to P protein. Partial (+)DNA is synthesized from the (-)DNA template and generates the relaxed circular DNA (RC-DNA) genome. After budding and infection, the RC-DNA migrates in the nucleus, and is converted into a plasmid-like covalently closed circular DNA (cccDNA). The activity of P protein does not seem to be necessary for cccDNA generation, and is presumably released from (+)DNA by host nuclear DNA repair machinery. This Hepatitis B virus genotype C subtype ayw (isolate Australia/AustRC/1992) (HBV-C) protein is Protein P.